Reading from the N-terminus, the 205-residue chain is MDKILTAADAALRTLFAQPSAAERSPAAGIAEGELTEAQRRLSGALMRVNHVGEVCAQALYNAQAMVTRDMVLREHLLEAAREETDHLAWTRDRLNALGDRPSLLNPLWFAGAFAIGVVAAKISDAASLGFVVETEEQVSAHLESHLGLLPEEDRASLAVVARMKDDEERHAAAAREAGALQLPPPARALMRLAAKVMTTTAHRI.

Fe cation-binding residues include E54, E84, H87, E136, E168, and H171.

Belongs to the COQ7 family. Fe cation is required as a cofactor.

It localises to the cell membrane. It catalyses the reaction a 5-methoxy-2-methyl-3-(all-trans-polyprenyl)benzene-1,4-diol + AH2 + O2 = a 3-demethylubiquinol + A + H2O. Its pathway is cofactor biosynthesis; ubiquinone biosynthesis. Catalyzes the hydroxylation of 2-nonaprenyl-3-methyl-6-methoxy-1,4-benzoquinol during ubiquinone biosynthesis. The sequence is that of 3-demethoxyubiquinol 3-hydroxylase from Delftia acidovorans (strain DSM 14801 / SPH-1).